The sequence spans 450 residues: MGKYFGTDGVRGEANVELTPELAFKLGRFGGYVLSQHETERPRVFVARDTRISGEMLEAALIAGLLSVGIEVYKLGVLATPGVSYLVRTEKASAGVMISASHNPALDNGIKFFGSDGFKLADEQELEIEALLDAKEDLLPRPSAEGLGALVDYPEGLRKYERFLVTTGADLDGLKIALDTANGAASVSARNVFLDLNADITVIGENPNGLNINDGIGSTHPEKLQDLVTETASDIGLAFDGDSDRLIAVDENGAIVDGDKIMFIIGKYLSEKGLLAKNTIVTTVMSNLGFHKALDSCGIHKKVTAVGDRYVVEEMRQFGYNLGGEQSGHVIIMDYNTTGDGQLTAVQLTKIMKETGKTLSELASEVTIYPQKLVNIRVDNSMKERAMEVPAIAEVIAQMEGEMAGNGRILVRPSGTEPLLRVMAEAPSNEEVDYYVDTIAAVVRAEIGLD.

S101 functions as the Phosphoserine intermediate in the catalytic mechanism. Mg(2+) contacts are provided by S101, D240, D242, and D244. A Phosphoserine modification is found at S101.

Belongs to the phosphohexose mutase family. Mg(2+) is required as a cofactor. Post-translationally, activated by phosphorylation.

The enzyme catalyses alpha-D-glucosamine 1-phosphate = D-glucosamine 6-phosphate. In terms of biological role, catalyzes the conversion of glucosamine-6-phosphate to glucosamine-1-phosphate. The chain is Phosphoglucosamine mutase from Streptococcus equi subsp. zooepidemicus (strain MGCS10565).